The following is a 322-amino-acid chain: MSQRQFKVIIIGGSVTGLTLAHSLHKIGIDYVVLEKRDTVTPQEGASIGILPNGARILDQLGLYEAIEDEAPPLGATRIHFPDGFAFTSLYPKKILENFGYPIAFLERRQLLRILYDALPDKTRIHVNKTMSTIEHFTKDEITGARVLTKEGDVYEGDLIVGADGIHSQTRGEIWRRINSSKSEFEPAECIDKCILIEYSCCFGISKCVTGLIAGEQVMHMRNGRTLVVIPSKDEVVFWFLVEKLDRKYTYSEAPRFTIDDATALCSQVFTLPIGNGIKFEDVWNKREVVNMLSLEESCLSTWSTGRLVCIGDSIHKVSIPS.

Residues Glu35, Gly49, Arg108, and Asp313 each coordinate FAD.

It belongs to the paxM FAD-dependent monooxygenase family. FAD serves as cofactor.

It participates in secondary metabolite biosynthesis; terpenoid biosynthesis. Its function is as follows. FAD-dependent monooxygenase; part of the gene cluster that mediates the biosynthesis of the immunosuppressants subglutinols, meroterpenoids consisting of an alpha-pyrone (4-hydroxy-5,6-dimethyl-2-pyrone) moiety attached to a decalin core fused to a five-membered cyclic ether carrying a prenylside chain. The first step of the pathway is the synthesis of the alpha-pyrone moiety by the polyketide synthase subA via condensation of one acetyl-CoA starter unit with 3 malonyl-CoA units and 2 methylations. The alpha-pyrone is then combined with geranylgeranyl pyrophosphate (GGPP) formed by the GGPP synthase subD through the action of the prenyltransferase subC to yield a linear alpha-pyrone diterpenoid. Subsequent steps in the subglutinol biosynthetic pathway involve the decalin core formation, which is thought to be initiated by the epoxidation of the C10-C11 olefin by the FAD-dependent oxidoreductase subE. The following cyclization cascade would be catalyzed by the terpene cyclase subB. Lastly, the FAD-dependent dehydrogenase subF probably catalyzes the five-membered cyclic ether formation to complete the formation of subglutinol A. Subsequent redox reactions appear to give rise to subglutinol C and D, however, it remains unclear which enzymes are responsible for these transformations. SubD may have secondary function in the conversion of the identified subglutinols to subglutinol analog 45, which seems to be the major product of the cluster. This is FAD-dependent monooxygenase subE from Metarhizium robertsii (strain ARSEF 23 / ATCC MYA-3075) (Metarhizium anisopliae (strain ARSEF 23)).